Reading from the N-terminus, the 249-residue chain is Green-light absorbing proteorhodopsin (249 aa).

An N-terminal signal peptide occupies residues 1–17; sequence MKLLLILGSVIALPTFA. Helical transmembrane passes span 30–49, 62–84, 99–121, 128–147, 151–168, 189–211, and 221–243; these read GVSF…FFFV, LTVS…GVWI, LLTV…NVAG, LVGS…GIMA, AFII…ELWA, MMYI…YLMG, and LIYN…NVAV. At Lys231 the chain carries N6-(retinylidene)lysine.

It belongs to the archaeal/bacterial/fungal opsin family. Post-translationally, contains one covalently linked retinal chromophore.

The protein resides in the cell membrane. Its function is as follows. Light-driven proton pump that generates photothrophic energy. The polypeptide is Green-light absorbing proteorhodopsin (Gamma-proteobacterium EBAC31A08).